Reading from the N-terminus, the 744-residue chain is Palmitoyltransferase ZDHHC5-A (744 aa).

Over residues 1–11 (MPSGSMSGGVS) the composition is skewed to gly residues. The disordered stretch occupies residues 1–25 (MPSGSMSGGVSGPTSPPHPTVPSRP). Topologically, residues 1–30 (MPSGSMSGGVSGPTSPPHPTVPSRPLRPSR) are cytoplasmic. The chain crosses the membrane as a helical span at residues 31–51 (YVPVSAATAFLVGSTTLFFCF). Over 52–61 (TCPWLSEQFS) the chain is Extracellular. A helical membrane pass occupies residues 62–82 (VAVPIYNGVMFMFVLANFCMA). The Cytoplasmic segment spans residues 83 to 167 (TFMDPGIFPR…IGRRNYRYFF (85 aa)). Residues 121–171 (KWCSTCRFYRPPRCSHCSVCDNCVEDFDHHCPWVNNCIGRRNYRYFFLFLL) enclose the DHHC domain. The active-site S-palmitoyl cysteine intermediate is Cys-151. The chain crosses the membrane as a helical span at residues 168–188 (LFLLSLTAHIMGVFGFGLLFI). Over 189 to 208 (LYHTQQLDRVHSAVTMAVMC) the chain is Extracellular. The helical transmembrane segment at 209–229 (VAGLFFIPVAGLTGFHVVLVA) threads the bilayer. At 230 to 744 (RGRTTNEQVT…VGGTTYEISV (515 aa)) the chain is on the cytoplasmic side. 3 disordered regions span residues 314–523 (SLEM…PVVG), 556–645 (QHAV…SLSY), and 664–744 (SVAG…EISV). Polar residues predominate over residues 369–393 (TYSSPGKNHTALTHAYANQSSQQPG). Positions 398–413 (PSLDGREGGGAERSGA) are enriched in basic and acidic residues. Residues 415–428 (RTGGGPGGPPGSGI) show a composition bias toward gly residues. Over residues 460–501 (THNAPPSEATTSTSYKSLANQTPPQAARNGSLSYDSLLTPSE) the composition is skewed to polar residues. The segment covering 571–584 (PERERERLLHDSQA) has biased composition (basic and acidic residues). Basic residues predominate over residues 585–601 (QHHHHHHHHHHHHRPPR). Composition is skewed to low complexity over residues 621–630 (RTRSTDTTHP) and 689–723 (PKPSSTPSSPTHPISVSTRPGQAHSSAGSSQSPAH). Residues 725–737 (PGGGVKKVTGVGG) show a composition bias toward gly residues.

This sequence belongs to the DHHC palmitoyltransferase family. ERF2/ZDHHC9 subfamily.

It is found in the cell membrane. The catalysed reaction is L-cysteinyl-[protein] + hexadecanoyl-CoA = S-hexadecanoyl-L-cysteinyl-[protein] + CoA. Palmitoyltransferase that catalyzes the addition of palmitate onto various protein substrates and is involved in a variety of cellular processes. This chain is Palmitoyltransferase ZDHHC5-A, found in Danio rerio (Zebrafish).